The chain runs to 303 residues: Rhomboid-related protein 2 (303 aa).

Positions 20–39 (MKEELEEEEKMREDGGGKDR) are disordered. Basic and acidic residues predominate over residues 28-39 (EKMREDGGGKDR). The next 7 membrane-spanning stretches (helical) occupy residues 72 to 92 (PVFI…YAVW), 128 to 148 (LVHA…VLGI), 159 to 179 (VGLV…IFDP), 183 to 203 (LVGA…NVLV), 212 to 232 (FGIF…GFAL), 245 to 265 (VSFA…YTVF), and 278 to 298 (FWIA…FNIF). Ser-187 functions as the Nucleophile in the catalytic mechanism. The active site involves His-250.

It belongs to the peptidase S54 family. Post-translationally, proteolytic processing of the proenzyme produces a N-terminal fragment (NTF) and a C-terminal fragment (CTF). The processing is required for activation of the protease.

The protein localises to the cell membrane. The catalysed reaction is Cleaves type-1 transmembrane domains using a catalytic dyad composed of serine and histidine that are contributed by different transmembrane domains.. Its function is as follows. Involved in regulated intramembrane proteolysis and the subsequent release of functional polypeptides from their membrane anchors. Known substrate: EFNB3. This chain is Rhomboid-related protein 2 (RHBDL2), found in Homo sapiens (Human).